Consider the following 179-residue polypeptide: Large ribosomal subunit protein uL6 (179 aa).

It belongs to the universal ribosomal protein uL6 family. Part of the 50S ribosomal subunit.

Functionally, this protein binds to the 23S rRNA, and is important in its secondary structure. It is located near the subunit interface in the base of the L7/L12 stalk, and near the tRNA binding site of the peptidyltransferase center. The sequence is that of Large ribosomal subunit protein uL6 from Chlorobium chlorochromatii (strain CaD3).